A 228-amino-acid polypeptide reads, in one-letter code: Acyl-protein thioesterase 1 (228 aa).

Catalysis depends on charge relay system residues serine 119, aspartate 174, and histidine 208.

Belongs to the AB hydrolase superfamily. AB hydrolase 2 family.

The protein resides in the cytoplasm. It localises to the nucleus. The enzyme catalyses S-hexadecanoyl-L-cysteinyl-[protein] + H2O = L-cysteinyl-[protein] + hexadecanoate + H(+). In terms of biological role, hydrolyzes fatty acids from S-acylated cysteine residues in proteins with a strong preference for palmitoylated G-alpha proteins over other acyl substrates. Mediates the deacylation of G-alpha proteins such as GPA1 in vivo, but has weak or no activity toward palmitoylated Ras proteins. Has weak lysophospholipase activity in vitro; however such activity may not exist in vivo. In Kluyveromyces lactis (strain ATCC 8585 / CBS 2359 / DSM 70799 / NBRC 1267 / NRRL Y-1140 / WM37) (Yeast), this protein is Acyl-protein thioesterase 1.